The primary structure comprises 866 residues: DNA topoisomerase 3-beta (866 aa).

The region spanning 4–149 (TVLMVAEKPS…RIFRAKFSSV (146 aa)) is the Toprim domain. Mg(2+)-binding residues include Glu10, Asp114, and Asp116. Residues 165–585 (SKDEALAVDA…HVLQQFMKKY (421 aa)) form the Topo IA-type catalytic domain. Residues 207–212 (SYGPCQ) form an interaction with DNA region. The active-site O-(5'-phospho-DNA)-tyrosine intermediate is the Tyr329. Basic residues predominate over residues 830-853 (MRRGRGRGRGRGRGRGSSRGRRGS). Residues 830–866 (MRRGRGRGRGRGRGRGSSRGRRGSSRHDDPKMSFRDF) form a disordered region. The segment covering 854 to 866 (SRHDDPKMSFRDF) has biased composition (basic and acidic residues).

Belongs to the type IA topoisomerase family. The cofactor is Mg(2+).

It catalyses the reaction ATP-independent breakage of single-stranded DNA, followed by passage and rejoining.. In terms of biological role, releases the supercoiling and torsional tension of DNA introduced during the DNA replication and transcription by transiently cleaving and rejoining one strand of the DNA duplex. Introduces a single-strand break via transesterification at a target site in duplex DNA. The scissile phosphodiester is attacked by the catalytic tyrosine of the enzyme, resulting in the formation of a DNA-(5'-phosphotyrosyl)-enzyme intermediate and the expulsion of a 3'-OH DNA strand. The free DNA strand than undergoes passage around the unbroken strand thus removing DNA supercoils. Finally, in the religation step, the DNA 3'-OH attacks the covalent intermediate to expel the active-site tyrosine and restore the DNA phosphodiester backbone. The sequence is that of DNA topoisomerase 3-beta (TOP3B) from Oryza sativa subsp. japonica (Rice).